The sequence spans 529 residues: Bifunctional purine biosynthesis protein PurH (529 aa).

The MGS-like domain occupies 1 to 148 (MQQRRPVRRA…KNHKDVAIVV (148 aa)).

This sequence belongs to the PurH family.

It catalyses the reaction (6R)-10-formyltetrahydrofolate + 5-amino-1-(5-phospho-beta-D-ribosyl)imidazole-4-carboxamide = 5-formamido-1-(5-phospho-D-ribosyl)imidazole-4-carboxamide + (6S)-5,6,7,8-tetrahydrofolate. The enzyme catalyses IMP + H2O = 5-formamido-1-(5-phospho-D-ribosyl)imidazole-4-carboxamide. It participates in purine metabolism; IMP biosynthesis via de novo pathway; 5-formamido-1-(5-phospho-D-ribosyl)imidazole-4-carboxamide from 5-amino-1-(5-phospho-D-ribosyl)imidazole-4-carboxamide (10-formyl THF route): step 1/1. Its pathway is purine metabolism; IMP biosynthesis via de novo pathway; IMP from 5-formamido-1-(5-phospho-D-ribosyl)imidazole-4-carboxamide: step 1/1. The protein is Bifunctional purine biosynthesis protein PurH of Salmonella heidelberg (strain SL476).